Here is a 406-residue protein sequence, read N- to C-terminus: MRGSVECTWGWGHCAPSPLLLWTLLLFAAPFGLLGEKTRQVSLEVIPNWLGPLQNLLHIRAVGTNSTLHYVWSSLGPLAVVMVATNTPHSTLSVNWSLLLSPEPDGGLMVLPKDSIQFSSALVFTRLLEFDSTNVSDTAAKPLGRPYPPYSLADFSWNNITDSLDPATLSATFQGHPMNDPTRTFANGSLAFRVQAFSRSSRPAQPPRLLHTADTCQLEVALIGASPRGNRSLFGLEVATLGQGPDCPSMQEQHSIDDEYAPAVFQLDQLLWGSLPSGFAQWRPVAYSQKPGGRESALPCQASPLHPALAYSLPQSPIVRAFFGSQNNFCAFNLTFGASTGPGYWDQHYLSWSMLLGVGFPPVDGLSPLVLGIMAVALGAPGLMLLGGGLVLLLHHKKYSEYQSIN.

Residues 1-35 (MRGSVECTWGWGHCAPSPLLLWTLLLFAAPFGLLG) form the signal peptide. At 36–372 (EKTRQVSLEV…VDGLSPLVLG (337 aa)) the chain is on the lumenal side. 5 N-linked (GlcNAc...) asparagine glycosylation sites follow: N65, N134, N159, N187, and N230. The helical transmembrane segment at 373–393 (IMAVALGAPGLMLLGGGLVLL) threads the bilayer. The Cytoplasmic portion of the chain corresponds to 394 to 406 (LHHKKYSEYQSIN). A Lysosomal targeting motif motif is present at residues 402 to 406 (YQSIN).

Belongs to the GLMP family. As to quaternary structure, interacts (via lumenal domain) with lysosomal protein MFSD1; the interaction starts while both proteins are still in the endoplasmic reticulum and is required for stabilization of MFSD1 in lysosomes but has no direct effect on its targeting to lysosomes or transporter activity. Highly N-glycosylated. N-glycosylation is essential for GLMP stability and for MFSD1 lysosomal localization.

Its subcellular location is the lysosome membrane. In terms of biological role, required to protect lysosomal transporter MFSD1 from lysosomal proteolysis and for MFSD1 lysosomal localization. The chain is Glycosylated lysosomal membrane protein from Homo sapiens (Human).